We begin with the raw amino-acid sequence, 591 residues long: Frizzled and smoothened-like protein F (591 aa).

The N-terminal stretch at 1–17 is a signal peptide; that stretch reads MKILIIFIIFIISYISG. Residues 18-244 are Extracellular-facing; the sequence is FEIPKGFGIG…KWDQLLTMSK (227 aa). The region spanning 30-177 is the FZ domain; sequence IPDAECLNYI…GTFAVPCSDP (148 aa). 3 disulfide bridges follow: C35–C105, C48–C98, and C123–C174. N-linked (GlcNAc...) asparagine glycans are attached at residues N167, N187, N202, and N230. The chain crosses the membrane as a helical span at residues 245-265; sequence ILSTISFILSLYNVLTFGIIN. Residues 266 to 275 are Cytoplasmic-facing; the sequence is KKVSDPHKCT. A helical transmembrane segment spans residues 276–296; sequence CFFSGSIALVNLCDIITYGIG. Over 297–321 the chain is Extracellular; sequence YEELLCPEPGRSAKQQLDPVCGLTG. Residues 322 to 342 form a helical membrane-spanning segment; that stretch reads AFFHLGITYCVLWSMTMGLVL. Residues 343 to 353 are Cytoplasmic-facing; sequence YCSVKRQKWFK. Residues 354–374 traverse the membrane as a helical segment; the sequence is FNYFLIGNTTFTITTVVIAAA. Over 375-397 the chain is Extracellular; the sequence is TSKFEAGLGSIECWIRDRWYAIS. A helical transmembrane segment spans residues 398–418; the sequence is LFWIPCGIALLIGSFCIIAVI. The Cytoplasmic segment spans residues 419-442; sequence HEVYKTSKKSISNRNDLLQRELKP. The helical transmembrane segment at 443 to 463 threads the bilayer; sequence LLIVIFISGSFLYLFIFFFDI. The Extracellular portion of the chain corresponds to 464 to 495; the sequence is ERKFGGYRSAVEDYVLCLLNGSQEECFTTGPS. Residue N483 is glycosylated (N-linked (GlcNAc...) asparagine). A helical transmembrane segment spans residues 496–516; that stretch reads YVPYFLFYLVIRWFGIIFFLF. Residues 517–591 are Cytoplasmic-facing; that stretch reads YGTSNIARKI…AVELESIKIN (75 aa). The segment covering 538–571 has biased composition (low complexity); the sequence is SSISPKSTPKSSPKNSDSKINSNSTNNNNMILND. The tract at residues 538 to 573 is disordered; it reads SSISPKSTPKSSPKNSDSKINSNSTNNNNMILNDNN.

The protein belongs to the G-protein coupled receptor Fz/Smo family.

The protein localises to the membrane. This is Frizzled and smoothened-like protein F (fslF) from Dictyostelium discoideum (Social amoeba).